The sequence spans 416 residues: Serine hydroxymethyltransferase (416 aa).

Residues Leu-118 and 122–124 (GHL) each bind (6S)-5,6,7,8-tetrahydrofolate. The residue at position 226 (Lys-226) is an N6-(pyridoxal phosphate)lysine. (6S)-5,6,7,8-tetrahydrofolate contacts are provided by residues Glu-242 and 350 to 352 (SPF).

Belongs to the SHMT family. As to quaternary structure, homodimer. Pyridoxal 5'-phosphate is required as a cofactor.

The protein localises to the cytoplasm. The catalysed reaction is (6R)-5,10-methylene-5,6,7,8-tetrahydrofolate + glycine + H2O = (6S)-5,6,7,8-tetrahydrofolate + L-serine. It functions in the pathway one-carbon metabolism; tetrahydrofolate interconversion. It participates in amino-acid biosynthesis; glycine biosynthesis; glycine from L-serine: step 1/1. Functionally, catalyzes the reversible interconversion of serine and glycine with tetrahydrofolate (THF) serving as the one-carbon carrier. This reaction serves as the major source of one-carbon groups required for the biosynthesis of purines, thymidylate, methionine, and other important biomolecules. Also exhibits THF-independent aldolase activity toward beta-hydroxyamino acids, producing glycine and aldehydes, via a retro-aldol mechanism. The sequence is that of Serine hydroxymethyltransferase from Helicobacter acinonychis (strain Sheeba).